We begin with the raw amino-acid sequence, 497 residues long: UDP-N-acetylmuramoyl-L-alanyl-D-glutamate--2,6-diaminopimelate ligase (497 aa).

L27 and S29 together coordinate UDP-N-acetyl-alpha-D-muramoyl-L-alanyl-D-glutamate. 116 to 122 (GTNGKTT) contributes to the ATP binding site. Residues N157, 158-159 (TT), S185, Q191, and R193 each bind UDP-N-acetyl-alpha-D-muramoyl-L-alanyl-D-glutamate. The residue at position 225 (K225) is an N6-carboxylysine. Meso-2,6-diaminopimelate contacts are provided by residues R392, 416–419 (DNPR), G467, and E471. Residues 416-419 (DNPR) carry the Meso-diaminopimelate recognition motif motif.

Belongs to the MurCDEF family. MurE subfamily. The cofactor is Mg(2+). In terms of processing, carboxylation is probably crucial for Mg(2+) binding and, consequently, for the gamma-phosphate positioning of ATP.

The protein resides in the cytoplasm. It carries out the reaction UDP-N-acetyl-alpha-D-muramoyl-L-alanyl-D-glutamate + meso-2,6-diaminopimelate + ATP = UDP-N-acetyl-alpha-D-muramoyl-L-alanyl-gamma-D-glutamyl-meso-2,6-diaminopimelate + ADP + phosphate + H(+). Its pathway is cell wall biogenesis; peptidoglycan biosynthesis. Its function is as follows. Catalyzes the addition of meso-diaminopimelic acid to the nucleotide precursor UDP-N-acetylmuramoyl-L-alanyl-D-glutamate (UMAG) in the biosynthesis of bacterial cell-wall peptidoglycan. The chain is UDP-N-acetylmuramoyl-L-alanyl-D-glutamate--2,6-diaminopimelate ligase from Buchnera aphidicola subsp. Schizaphis graminum (strain Sg).